Reading from the N-terminus, the 160-residue chain is Ribosome maturation factor RimP (160 aa).

This sequence belongs to the RimP family.

Its subcellular location is the cytoplasm. Required for maturation of 30S ribosomal subunits. This is Ribosome maturation factor RimP from Symbiobacterium thermophilum (strain DSM 24528 / JCM 14929 / IAM 14863 / T).